The sequence spans 404 residues: Arginine biosynthesis bifunctional protein ArgJ (404 aa).

Substrate is bound by residues threonine 156, lysine 182, threonine 193, glutamate 277, asparagine 399, and serine 404. The active-site Nucleophile is threonine 193.

This sequence belongs to the ArgJ family. As to quaternary structure, heterotetramer of two alpha and two beta chains.

It localises to the cytoplasm. The enzyme catalyses N(2)-acetyl-L-ornithine + L-glutamate = N-acetyl-L-glutamate + L-ornithine. It carries out the reaction L-glutamate + acetyl-CoA = N-acetyl-L-glutamate + CoA + H(+). It functions in the pathway amino-acid biosynthesis; L-arginine biosynthesis; L-ornithine and N-acetyl-L-glutamate from L-glutamate and N(2)-acetyl-L-ornithine (cyclic): step 1/1. It participates in amino-acid biosynthesis; L-arginine biosynthesis; N(2)-acetyl-L-ornithine from L-glutamate: step 1/4. Its function is as follows. Catalyzes two activities which are involved in the cyclic version of arginine biosynthesis: the synthesis of N-acetylglutamate from glutamate and acetyl-CoA as the acetyl donor, and of ornithine by transacetylation between N(2)-acetylornithine and glutamate. In Chlorobaculum tepidum (strain ATCC 49652 / DSM 12025 / NBRC 103806 / TLS) (Chlorobium tepidum), this protein is Arginine biosynthesis bifunctional protein ArgJ.